The chain runs to 334 residues: Holliday junction branch migration complex subunit RuvB (334 aa).

A large ATPase domain (RuvB-L) region spans residues 4 to 184 (ADRLIQPQDL…FGIPLRLEFY (181 aa)). ATP contacts are provided by residues Arg24, Gly65, Lys68, Thr69, Thr70, 131 to 133 (EDY), Arg174, Tyr184, and Arg221. Thr69 lines the Mg(2+) pocket. The segment at 185 to 255 (NVRDLSSIVA…VAQSALDLLD (71 aa)) is small ATPAse domain (RuvB-S). Residues 258 to 334 (SEGFDYMDRK…YSHFDLIKPD (77 aa)) are head domain (RuvB-H). DNA-binding residues include Arg294, Arg313, and Arg318.

It belongs to the RuvB family. As to quaternary structure, homohexamer. Forms an RuvA(8)-RuvB(12)-Holliday junction (HJ) complex. HJ DNA is sandwiched between 2 RuvA tetramers; dsDNA enters through RuvA and exits via RuvB. An RuvB hexamer assembles on each DNA strand where it exits the tetramer. Each RuvB hexamer is contacted by two RuvA subunits (via domain III) on 2 adjacent RuvB subunits; this complex drives branch migration. In the full resolvosome a probable DNA-RuvA(4)-RuvB(12)-RuvC(2) complex forms which resolves the HJ.

The protein localises to the cytoplasm. It catalyses the reaction ATP + H2O = ADP + phosphate + H(+). Its function is as follows. The RuvA-RuvB-RuvC complex processes Holliday junction (HJ) DNA during genetic recombination and DNA repair, while the RuvA-RuvB complex plays an important role in the rescue of blocked DNA replication forks via replication fork reversal (RFR). RuvA specifically binds to HJ cruciform DNA, conferring on it an open structure. The RuvB hexamer acts as an ATP-dependent pump, pulling dsDNA into and through the RuvAB complex. RuvB forms 2 homohexamers on either side of HJ DNA bound by 1 or 2 RuvA tetramers; 4 subunits per hexamer contact DNA at a time. Coordinated motions by a converter formed by DNA-disengaged RuvB subunits stimulates ATP hydrolysis and nucleotide exchange. Immobilization of the converter enables RuvB to convert the ATP-contained energy into a lever motion, pulling 2 nucleotides of DNA out of the RuvA tetramer per ATP hydrolyzed, thus driving DNA branch migration. The RuvB motors rotate together with the DNA substrate, which together with the progressing nucleotide cycle form the mechanistic basis for DNA recombination by continuous HJ branch migration. Branch migration allows RuvC to scan DNA until it finds its consensus sequence, where it cleaves and resolves cruciform DNA. This chain is Holliday junction branch migration complex subunit RuvB, found in Shewanella amazonensis (strain ATCC BAA-1098 / SB2B).